We begin with the raw amino-acid sequence, 270 residues long: MPQPRKRFAQHWLRSETALEQIIQAANLKKSDRLLEIGPGTGILTRRLLPLVQSLIAVELDWDLCKKLVKSLGDEDNFLLLQGDILKLDIATEAQQFPKFLPINKVVANIPYNITSPILDKLLGRISSPKQPSYDLIVLLIQKEVAQRIIAYPGSKNYGALSIKMQYLADCNYICDVPKKSFYPPPKVDSAVITFRPRSLLNSATNPKYLETLINLGFSSRRKMLRNNLQSLIDRDLLTEFLTEIDLNEQVRAENLDLNQWIALSNYFSQ.

S-adenosyl-L-methionine-binding residues include His-11, Leu-13, Gly-38, Glu-59, Asp-84, and Asn-109.

Belongs to the class I-like SAM-binding methyltransferase superfamily. rRNA adenine N(6)-methyltransferase family. RsmA subfamily.

It localises to the cytoplasm. The enzyme catalyses adenosine(1518)/adenosine(1519) in 16S rRNA + 4 S-adenosyl-L-methionine = N(6)-dimethyladenosine(1518)/N(6)-dimethyladenosine(1519) in 16S rRNA + 4 S-adenosyl-L-homocysteine + 4 H(+). Its function is as follows. Specifically dimethylates two adjacent adenosines (A1518 and A1519) in the loop of a conserved hairpin near the 3'-end of 16S rRNA in the 30S particle. May play a critical role in biogenesis of 30S subunits. This is Ribosomal RNA small subunit methyltransferase A from Crocosphaera subtropica (strain ATCC 51142 / BH68) (Cyanothece sp. (strain ATCC 51142)).